Consider the following 59-residue polypeptide: UPF0434 protein GOX0764 (59 aa).

It belongs to the UPF0434 family.

This is UPF0434 protein GOX0764 from Gluconobacter oxydans (strain 621H) (Gluconobacter suboxydans).